The chain runs to 210 residues: Glutathione S-transferase P 2 (210 aa).

Residues 2 to 81 form the GST N-terminal domain; the sequence is PPYTIVYFPS…HLGRSLGLYG (80 aa). Residues tyrosine 8, arginine 14, tryptophan 39, lysine 45, 52–53, and 65–66 contribute to the glutathione site; these read QL and QS. One can recognise a GST C-terminal domain in the interval 83-204; sequence NQREAAQVDM…SSPEHVNRPI (122 aa).

This sequence belongs to the GST superfamily. Pi family. In terms of assembly, homodimer. As to expression, selectively expressed in gall bladder, colon, heart, and skeletal muscle.

It catalyses the reaction RX + glutathione = an S-substituted glutathione + a halide anion + H(+). Its function is as follows. Conjugation of reduced glutathione to a wide number of exogenous and endogenous hydrophobic electrophiles. Cannot metabolize 1-chloro-2,4-dinitrobenzene. The sequence is that of Glutathione S-transferase P 2 (Gstp2) from Mus musculus (Mouse).